Here is a 445-residue protein sequence, read N- to C-terminus: Cholesterol side-chain cleavage enzyme, mitochondrial (445 aa).

Residues 1-36 constitute a mitochondrion transit peptide; the sequence is RGLPSRSVFLRGCQASLSTAQERLGHPGVPTREGVR.

The protein belongs to the cytochrome P450 family. As to quaternary structure, interacts with FDX1/adrenodoxin. Heme serves as cofactor.

Its subcellular location is the mitochondrion inner membrane. It carries out the reaction 6 reduced [adrenodoxin] + cholesterol + 3 O2 + 6 H(+) = 4-methylpentanal + pregnenolone + 6 oxidized [adrenodoxin] + 4 H2O. The enzyme catalyses 2 reduced [adrenodoxin] + cholesterol + O2 + 2 H(+) = (22R)-hydroxycholesterol + 2 oxidized [adrenodoxin] + H2O. The catalysed reaction is (22R)-hydroxycholesterol + 2 reduced [adrenodoxin] + O2 + 2 H(+) = (20R,22R)-20,22-dihydroxycholesterol + 2 oxidized [adrenodoxin] + H2O. It catalyses the reaction (20R,22R)-20,22-dihydroxycholesterol + 2 reduced [adrenodoxin] + O2 + 2 H(+) = 4-methylpentanal + pregnenolone + 2 oxidized [adrenodoxin] + 2 H2O. Its pathway is lipid metabolism; C21-steroid hormone metabolism. The protein operates within steroid metabolism; cholesterol metabolism. In terms of biological role, a cytochrome P450 monooxygenase that catalyzes the side-chain hydroxylation and cleavage of cholesterol to pregnenolone, the precursor of most steroid hormones. Catalyzes three sequential oxidation reactions of cholesterol, namely the hydroxylation at C22 followed with the hydroxylation at C20 to yield 20R,22R-hydroxycholesterol that is further cleaved between C20 and C22 to yield the C21-steroid pregnenolone and 4-methylpentanal. Mechanistically, uses molecular oxygen inserting one oxygen atom into a substrate and reducing the second into a water molecule. Two electrons are provided by NADPH via a two-protein mitochondrial transfer system comprising flavoprotein FDXR (adrenodoxin/ferredoxin reductase) and nonheme iron-sulfur protein FDX1 or FDX2 (adrenodoxin/ferredoxin). This chain is Cholesterol side-chain cleavage enzyme, mitochondrial (CYP11A1), found in Oryctolagus cuniculus (Rabbit).